Consider the following 245-residue polypeptide: 5-oxoprolinase subunit A (245 aa).

The protein belongs to the LamB/PxpA family. As to quaternary structure, forms a complex composed of PxpA, PxpB and PxpC.

It carries out the reaction 5-oxo-L-proline + ATP + 2 H2O = L-glutamate + ADP + phosphate + H(+). Its function is as follows. Catalyzes the cleavage of 5-oxoproline to form L-glutamate coupled to the hydrolysis of ATP to ADP and inorganic phosphate. The protein is 5-oxoprolinase subunit A of Yersinia pseudotuberculosis serotype O:1b (strain IP 31758).